We begin with the raw amino-acid sequence, 887 residues long: PAN2-PAN3 deadenylation complex subunit PAN3 (887 aa).

The C3H1-type zinc finger occupies 43-71 (GVKLKYCRYYAKDKTCFYGEECQFLHEDP). Disordered stretches follow at residues 102–147 (AVAG…IPGM), 284–307 (QTPNPTASEFIPKGGSTSRLSNVS), and 325–392 (SPAT…SGQV). Residues 122-138 (PGTGAAAGGGGSSGGLD) show a composition bias toward gly residues. Positions 147-498 (MDGGALTDTS…PPPNRIQKSS (352 aa)) are necessary and sufficient for interaction with PABPC1 but not needed for interaction with PAN2. A PABPC-interacting motif-2 (PAM-2) motif is present at residues 284–299 (QTPNPTASEFIPKGGS). A compositionally biased stretch (polar residues) spans 298–307 (GSTSRLSNVS). 2 positions are modified to phosphoserine: Ser-354 and Ser-361. Over residues 363-392 (TPNPASYMVPSSASTSVNNPVSQTPSSGQV) the composition is skewed to polar residues. The interval 463-750 (QIDQADMPAV…SVNDIMPMIG (288 aa)) is pseudokinase domain. ATP-binding positions include Arg-521, 570 to 577 (DFHAGGET), and 644 to 645 (TK). Residues 751–789 (ARFYTQLDAAQMRNDVIEEDLAKEVQNGRLFRLLAKLGT) adopt a coiled-coil conformation. Residues 790 to 887 (INERPEFQKD…ELIAAANGQL (98 aa)) are knob domain.

The protein belongs to the protein kinase superfamily. PAN3 family. In terms of assembly, homodimer. Forms a heterotrimer with a catalytic subunit PAN2 to form the poly(A)-nuclease (PAN) deadenylation complex. Interacts (via PAM-2 motif) with poly(A)-binding protein PABPC1 (via PABC domain), conferring substrate specificity of the enzyme complex. Interacts with the GW182 family proteins TNRC6A, TNRC6B and TNRC6. Interacts with YTHDF3. As to quaternary structure, interacts with PAN2. Interacts (via N-terminus) with PABPC1 at lower efficiency than isoform 3. Interacts with PAN2. Interacts (via N-terminus) with PABPC1 at higher efficiency than isoform 1.

It is found in the cytoplasm. The protein resides in the P-body. Its subcellular location is the nucleus. Its function is as follows. Regulatory subunit of the poly(A)-nuclease (PAN) deadenylation complex, one of two cytoplasmic mRNA deadenylases involved in general and miRNA-mediated mRNA turnover. PAN specifically shortens poly(A) tails of RNA and the activity is stimulated by poly(A)-binding protein (PABP). PAN deadenylation is followed by rapid degradation of the shortened mRNA tails by the CCR4-NOT complex. Deadenylated mRNAs are then degraded by two alternative mechanisms, namely exosome-mediated 3'-5' exonucleolytic degradation, or deadenylation-dependent mRNA decapping and subsequent 5'-3' exonucleolytic degradation by XRN1. PAN3 acts as a regulator for PAN activity, recruiting the catalytic subunit PAN2 to mRNA via its interaction with RNA and PABP, and to miRNA targets via its interaction with GW182 family proteins. Decreases PAN2-mediated deadenylation, possibly by preventing progression into the second CCR4-NOT mediated stage of biphasic deadenylation. Has a significant effect on mRNA stability, generally stabilizing a subset of the transcriptome. Stabilizes mRNAs degraded by the AU-rich element (ARE)-mediated mRNA decay pathway but promotes degradation of mRNAs by the microRNA-mediated pathway. Its activity influences mRNP remodeling, specifically reducing formation of a subset of P-bodies containing GW220, an isoform of TNRC6A. Functionally, enhances PAN2 deadenylase activity and has an extensive effect on mRNA stability, generally enhancing mRNA decay across the transcriptome by multiple pathways, including the AU-rich element (ARE)-mediated pathway, microRNA-mediated pathway and the nonsense-mediated pathway (NMD). Its activity is required for efficient P-body formation. May be involved in regulating mRNAs of genes involved in cell cycle progression and cell proliferation. This is PAN2-PAN3 deadenylation complex subunit PAN3 from Homo sapiens (Human).